The following is a 248-amino-acid chain: 14-3-3 protein sigma (248 aa).

Phosphoserine occurs at positions 5, 74, and 248.

Belongs to the 14-3-3 family. As to quaternary structure, homodimer. Interacts with KRT17 and SAMSN1. Found in a complex with XPO7, EIF4A1, ARHGAP1, VPS26A, VPS29 and VPS35. Interacts with GAB2. Interacts with SRPK2. Interacts with COPS6. Interacts with COP1; this interaction leads to proteasomal degradation. Interacts with the 'Thr-369' phosphorylated form of DAPK2. Interacts with PI4KB. Interacts with SLITRK1. Interacts with LRRK2; this interaction is dependent on LRRK2 phosphorylation. Interacts with PKP3 (via N-terminus); the interaction maintains the cytoplasmic pool of PKP3, facilitates PKP3 exchange at desmosomes and restricts PKP3 localization to existing desmosome cell junctions. Interacts with LCP2. Post-translationally, ubiquitinated. Ubiquitination by RFFL induces proteasomal degradation and indirectly regulates p53/TP53 activation.

The protein localises to the cytoplasm. Its subcellular location is the nucleus. The protein resides in the secreted. Adapter protein implicated in the regulation of a large spectrum of both general and specialized signaling pathways. Binds to a large number of partners, usually by recognition of a phosphoserine or phosphothreonine motif. Binding generally results in the modulation of the activity of the binding partner. Promotes cytosolic retention of GBP1 GTPase by binding to phosphorylated GBP1, thereby inhibiting the innate immune response. Also acts as a TP53/p53-regulated inhibitor of G2/M progression. When bound to KRT17, regulates protein synthesis and epithelial cell growth by stimulating Akt/mTOR pathway. Acts to maintain desmosome cell junction adhesion in epithelial cells via interacting with and sequestering PKP3 to the cytoplasm, thereby restricting its translocation to existing desmosome structures and therefore maintaining desmosome protein homeostasis. Also acts to facilitate PKP3 exchange at desmosome plaques, thereby maintaining keratinocyte intercellular adhesion. May also regulate MDM2 autoubiquitination and degradation and thereby activate p53/TP53. This chain is 14-3-3 protein sigma (SFN), found in Bos taurus (Bovine).